Consider the following 282-residue polypeptide: Bis(5'-nucleosyl)-tetraphosphatase, symmetrical (282 aa).

It belongs to the Ap4A hydrolase family.

It catalyses the reaction P(1),P(4)-bis(5'-adenosyl) tetraphosphate + H2O = 2 ADP + 2 H(+). In terms of biological role, hydrolyzes diadenosine 5',5'''-P1,P4-tetraphosphate to yield ADP. The sequence is that of Bis(5'-nucleosyl)-tetraphosphatase, symmetrical from Sodalis glossinidius (strain morsitans).